Reading from the N-terminus, the 449-residue chain is Probable phosphoglucosamine mutase (449 aa).

Ser-101 acts as the Phosphoserine intermediate in catalysis. Residues Ser-101, Asp-239, Asp-241, and Asp-243 each contribute to the Mg(2+) site. At Ser-101 the chain carries Phosphoserine.

It belongs to the phosphohexose mutase family. Mg(2+) is required as a cofactor. Activated by phosphorylation.

It catalyses the reaction alpha-D-glucosamine 1-phosphate = D-glucosamine 6-phosphate. Catalyzes the conversion of glucosamine-6-phosphate to glucosamine-1-phosphate. This is Probable phosphoglucosamine mutase from Methanothermobacter thermautotrophicus (strain ATCC 29096 / DSM 1053 / JCM 10044 / NBRC 100330 / Delta H) (Methanobacterium thermoautotrophicum).